Reading from the N-terminus, the 611-residue chain is Phosphomethylpyrimidine synthase (611 aa).

Residues asparagine 218, methionine 247, tyrosine 276, histidine 312, 332 to 334 (SRG), 373 to 376 (DGLR), and glutamate 412 contribute to the substrate site. Residue histidine 416 coordinates Zn(2+). Tyrosine 439 contributes to the substrate binding site. Histidine 480 is a binding site for Zn(2+). 3 residues coordinate [4Fe-4S] cluster: cysteine 560, cysteine 563, and cysteine 568.

Belongs to the ThiC family. Homodimer. [4Fe-4S] cluster is required as a cofactor.

The enzyme catalyses 5-amino-1-(5-phospho-beta-D-ribosyl)imidazole + S-adenosyl-L-methionine = 4-amino-2-methyl-5-(phosphooxymethyl)pyrimidine + CO + 5'-deoxyadenosine + formate + L-methionine + 3 H(+). It functions in the pathway cofactor biosynthesis; thiamine diphosphate biosynthesis. In terms of biological role, catalyzes the synthesis of the hydroxymethylpyrimidine phosphate (HMP-P) moiety of thiamine from aminoimidazole ribotide (AIR) in a radical S-adenosyl-L-methionine (SAM)-dependent reaction. This is Phosphomethylpyrimidine synthase from Caulobacter sp. (strain K31).